The sequence spans 190 residues: Cytoplasmic envelopment protein 3 (190 aa).

Gly-2 carries the N-myristoyl glycine; by host lipid modification. A disordered region spans residues 27–190; that stretch reads RQVSLRSYDN…TKKPAASLPF (164 aa). The segment covering 30–43 has biased composition (polar residues); sequence SLRSYDNIPPTSSS. Acidic residues predominate over residues 44–58; the sequence is DEGEDDDDGEDDDNE. Over residues 80–90 the composition is skewed to basic and acidic residues; it reads SHREATHDGSK. A compositionally biased stretch (basic residues) spans 108-123; sequence KQSKKKKKPSKHHHHQ. A compositionally biased stretch (acidic residues) spans 130–139; sequence ETDDLDEEDT.

The protein belongs to the herpesviridae cytoplasmic envelopment protein 3 family. In terms of assembly, interacts with cytoplasmic envelopment protein 2; this interaction is essential for the proper localization of each protein to the assembly complex and thus for the production of infectious virus. Post-translationally, myristoylation and palmitoylation (probably on one or more of the nearby cysteines at the N-terminus) enable membrane-binding and Golgi apparatus-specific targeting and are essential for efficient packaging. Phosphorylated. Phosphorylation does not seem to be required for recycling to the host Golgi apparatus. Packaging is selective for underphosphorylated forms.

The protein localises to the virion tegument. It is found in the virion membrane. The protein resides in the host cell membrane. Its subcellular location is the host Golgi apparatus membrane. Plays an important role in the cytoplasmic envelopment of tegument proteins and capsids during the assembly and egress processes. Also participates in viral entry at the fusion step probably by regulating the core fusion machinery. This chain is Cytoplasmic envelopment protein 3 (UL99), found in Human cytomegalovirus (strain AD169) (HHV-5).